Reading from the N-terminus, the 64-residue chain is MPKLKTRKAAAKRYKRTGTSNFLRRHAFKGHLLMKKSNKQKRKLSQTICVSRSDIKSIKLMLPY.

This sequence belongs to the bacterial ribosomal protein bL35 family.

It is found in the plastid. The protein resides in the chloroplast. The sequence is that of Large ribosomal subunit protein bL35c from Phaeodactylum tricornutum (strain CCAP 1055/1).